We begin with the raw amino-acid sequence, 1204 residues long: Bromodomain and PHD finger-containing protein 3 (1204 aa).

Disordered stretches follow at residues 1 to 27 and 76 to 127; these read MRKP…KCSP and SNKE…TGSQ. A compositionally biased stretch (basic residues) spans 89-99; it reads KSKKPSSKGKR. Residues 212-262 form a PHD-type 1 zinc finger; it reads DAFCCVCLDDECHNSNVILFCDICNLAVHQECYGVPYIPEGQWLCRCCLQS. A C2HC pre-PHD-type zinc finger spans residues 266–299; it reads PVDCVLCPNKGGAFKQTSDGHWAHVVCAIWIPEV. A PHD-type 2 zinc finger spans residues 323–387; that stretch reads LTCYICKQKG…RKTAYCEAHS (65 aa). Residues 393-464 form a disordered region; the sequence is ARRKGDSPRS…KKEPEEAGRE (72 aa). Phosphoserine is present on residues serine 399 and serine 402. Residues 417–429 show a composition bias toward acidic residues; sequence GEEEQEEAEEEGQ. Positions 442–454 are enriched in basic residues; sequence VSKKGKMSLKQKI. Lysine 445, lysine 447, and lysine 670 each carry N6-acetyllysine. Positions 588–692 constitute a Bromo domain; the sequence is LELMPFTVLL…DLGGAILRHA (105 aa). Residues serine 712 and serine 739 each carry the phosphoserine modification. The segment at 778–879 is disordered; that stretch reads RQKLAQPPPP…FLKSRKVEDE (102 aa). A compositionally biased stretch (acidic residues) spans 816-826; that stretch reads QQEEPEEEGDR. A phosphoserine mark is found at serine 899, serine 961, and serine 964. The disordered stretch occupies residues 903–1015; that stretch reads IDRLSLTNPD…ESGSDSECSL (113 aa). Basic and acidic residues predominate over residues 979–990; it reads SCSDSEGERSPQ. Residues 1075-1158 form the PWWP domain; sequence PLELVWAKCR…RDKVLPLGVE (84 aa).

Component of some HBO1 complexes composed of KAT7/HBO1, MEAF6, ING4 or ING5, and BRPF3. Component of the MOZ/MORF complex composed at least of ING5, KAT6A, KAT6B, MEAF6 and one of BRPF1, BRD1/BRPF2 and BRPF3. Interacts with KAT7/HBO1; the interaction is direct. In terms of tissue distribution, highly expressed in the adult testis and brain.

It is found in the nucleus. Its function is as follows. Scaffold subunit of various histone acetyltransferase (HAT) complexes, such as the MOZ/MORF and HBO1 complexes, which have a histone H3 acetyltransferase activity. Plays a role in DNA replication initiation by directing KAT7/HBO1 specificity towards histone H3 'Lys-14' acetylation (H3K14ac), thereby facilitating the activation of replication origins. Component of the MOZ/MORF complex which has a histone H3 acetyltransferase activity. This chain is Bromodomain and PHD finger-containing protein 3, found in Mus musculus (Mouse).